Here is a 284-residue protein sequence, read N- to C-terminus: Tryptophan synthase alpha chain (284 aa).

Active-site proton acceptor residues include Glu55 and Asp66.

Belongs to the TrpA family. As to quaternary structure, tetramer of two alpha and two beta chains.

The enzyme catalyses (1S,2R)-1-C-(indol-3-yl)glycerol 3-phosphate + L-serine = D-glyceraldehyde 3-phosphate + L-tryptophan + H2O. It functions in the pathway amino-acid biosynthesis; L-tryptophan biosynthesis; L-tryptophan from chorismate: step 5/5. Functionally, the alpha subunit is responsible for the aldol cleavage of indoleglycerol phosphate to indole and glyceraldehyde 3-phosphate. The polypeptide is Tryptophan synthase alpha chain (Methanococcus voltae).